A 100-amino-acid polypeptide reads, in one-letter code: Protein RnfH (100 aa).

It belongs to the UPF0125 (RnfH) family.

This Actinobacillus succinogenes (strain ATCC 55618 / DSM 22257 / CCUG 43843 / 130Z) protein is Protein RnfH.